The chain runs to 295 residues: DegV domain-containing protein MG326 (295 aa).

Positions threonine 4–isoleucine 292 constitute a DegV domain. Residues threonine 63 and serine 95 each coordinate hexadecanoate.

In terms of biological role, may bind long-chain fatty acids, such as palmitate, and may play a role in lipid transport or fatty acid metabolism. The polypeptide is DegV domain-containing protein MG326 (Mycoplasma genitalium (strain ATCC 33530 / DSM 19775 / NCTC 10195 / G37) (Mycoplasmoides genitalium)).